Consider the following 377-residue polypeptide: Endoplasmic reticulum-Golgi intermediate compartment protein 2 (377 aa).

The Cytoplasmic segment spans residues M1–G33. The helical transmembrane segment at G34 to V54 threads the bilayer. The Lumenal segment spans residues Y55–C319. Residues G320–V340 traverse the membrane as a helical segment. Residues E341–H377 are Cytoplasmic-facing.

This sequence belongs to the ERGIC family. May form a heteromeric complex composed of ERGIC1, ERGIC2 and ERGIC3. Interacts with ERGIC3, the interaction is required for the stable expression of both proteins. May interact with EEF1A1. Ubiquitously expressed.

The protein resides in the endoplasmic reticulum-Golgi intermediate compartment membrane. It localises to the golgi apparatus. Its subcellular location is the cis-Golgi network membrane. The protein localises to the endoplasmic reticulum membrane. It is found in the cytoplasm. The protein resides in the nucleus. Possible role in transport between endoplasmic reticulum and Golgi. The chain is Endoplasmic reticulum-Golgi intermediate compartment protein 2 (ERGIC2) from Homo sapiens (Human).